Here is a 317-residue protein sequence, read N- to C-terminus: Type II methyltransferase M.NgoBI (317 aa).

In terms of domain architecture, SAM-dependent MTase C5-type spans 2–302; sequence YKTIDLFSGI…KICSLLFPAR (301 aa). Cysteine 71 is an active-site residue.

Belongs to the class I-like SAM-binding methyltransferase superfamily. C5-methyltransferase family.

The enzyme catalyses a 2'-deoxycytidine in DNA + S-adenosyl-L-methionine = a 5-methyl-2'-deoxycytidine in DNA + S-adenosyl-L-homocysteine + H(+). Its function is as follows. A methylase, recognizes the double-stranded sequence 5'-RGCGCY-3', methylates C-5 on both strands, and protects the DNA from cleavage by the NgoBI endonuclease. This chain is Type II methyltransferase M.NgoBI (ngoBIM), found in Neisseria gonorrhoeae.